A 1112-amino-acid chain; its full sequence is Zinc finger protein 654 (1112 aa).

A disordered region spans residues 482-514 (PSSSLKKRVDQQSVEEDQSTGETDPDDASVVQP). Over residues 494–508 (SVEEDQSTGETDPDD) the composition is skewed to acidic residues. C2H2-type zinc fingers lie at residues 566–588 (FACV…LKNH), 738–763 (FKCP…RTVH), 779–801 (GKCK…LNRH), 807–831 (YFCL…TKSH), and 836–860 (AQCS…EAQH). Disordered regions lie at residues 885–906 (FSNE…KYST) and 997–1018 (VESQ…NLTS). 2 stretches are compositionally biased toward polar residues: residues 886 to 899 (SNEN…VSTS) and 1002 to 1018 (HSAL…NLTS). A phosphoserine mark is found at S1107 and S1111.

It belongs to the krueppel C2H2-type zinc-finger protein family.

It localises to the nucleus. Functionally, may be involved in transcriptional regulation. This chain is Zinc finger protein 654, found in Mus musculus (Mouse).